The chain runs to 429 residues: D-amino acid dehydrogenase (429 aa).

An FAD-binding site is contributed by 3 to 17 (VVVLGSGVVGVTSAY).

This sequence belongs to the DadA oxidoreductase family. Requires FAD as cofactor.

The catalysed reaction is a D-alpha-amino acid + A + H2O = a 2-oxocarboxylate + AH2 + NH4(+). Its pathway is amino-acid degradation; D-alanine degradation; NH(3) and pyruvate from D-alanine: step 1/1. In terms of biological role, oxidative deamination of D-amino acids. The polypeptide is D-amino acid dehydrogenase (Paraburkholderia xenovorans (strain LB400)).